Here is a 447-residue protein sequence, read N- to C-terminus: Na(+)-translocating NADH-quinone reductase subunit A (447 aa).

The protein belongs to the NqrA family. In terms of assembly, composed of six subunits; NqrA, NqrB, NqrC, NqrD, NqrE and NqrF.

The catalysed reaction is a ubiquinone + n Na(+)(in) + NADH + H(+) = a ubiquinol + n Na(+)(out) + NAD(+). In terms of biological role, NQR complex catalyzes the reduction of ubiquinone-1 to ubiquinol by two successive reactions, coupled with the transport of Na(+) ions from the cytoplasm to the periplasm. NqrA to NqrE are probably involved in the second step, the conversion of ubisemiquinone to ubiquinol. This Haemophilus influenzae (strain PittGG) protein is Na(+)-translocating NADH-quinone reductase subunit A.